The following is a 257-amino-acid chain: Pimeloyl-[acyl-carrier protein] methyl ester esterase (257 aa).

The AB hydrolase-1 domain maps to H15–H241. Substrate-binding positions include W22, S82–L83, and F143–Q147. The active-site Nucleophile is S82. Residues D207 and H235 contribute to the active site. Substrate is bound at residue H235.

Belongs to the AB hydrolase superfamily. Carboxylesterase BioH family. Monomer.

Its subcellular location is the cytoplasm. It catalyses the reaction 6-carboxyhexanoyl-[ACP] methyl ester + H2O = 6-carboxyhexanoyl-[ACP] + methanol + H(+). It participates in cofactor biosynthesis; biotin biosynthesis. Its function is as follows. The physiological role of BioH is to remove the methyl group introduced by BioC when the pimeloyl moiety is complete. It allows to synthesize pimeloyl-ACP via the fatty acid synthetic pathway through the hydrolysis of the ester bonds of pimeloyl-ACP esters. The polypeptide is Pimeloyl-[acyl-carrier protein] methyl ester esterase (Klebsiella pneumoniae (strain 342)).